Consider the following 734-residue polypeptide: Origin of replication complex subunit 3 (734 aa).

Disordered regions lie at residues 1-25 (MAPS…SDTA) and 532-554 (GQRQ…KLEK). A compositionally biased stretch (polar residues) spans 12–24 (QCSTTDSFNSSDT).

This sequence belongs to the ORC3 family. In terms of assembly, component of the origin recognition complex (ORC) composed of at least ORC1 (ORC1A or ORC1B), ORC2, ORC3, ORC4, ORC5 and ORC6. ORC is regulated in a cell-cycle and development dependent manner. It is sequentially assembled at the exit from anaphase of mitosis and disassembled as cells enter S phase. Interacts directly with ORC1A, ORC2, ORC4, ORC5 and ORC6. As to expression, follow a cell-cycle regulation with a peak at the G1/S-phase. Mostly expressed in siliques and flowers, and, to a lower exent, in flower buds, leaves, roots and stems.

It localises to the nucleus. Component of the origin recognition complex (ORC) that binds origins of replication. DNA-binding is ATP-dependent. The specific DNA sequences that define origins of replication have not been identified yet. The sequence is that of Origin of replication complex subunit 3 from Arabidopsis thaliana (Mouse-ear cress).